The chain runs to 145 residues: Hemoglobin subunit beta (145 aa).

A Globin domain is found at 1 to 145; it reads MLTSEEKAAV…VANALAHRYH (145 aa). Thr11 is subject to Phosphothreonine. Lys58 is subject to N6-acetyllysine. His62 lines the heme b pocket. Lys81 carries the N6-acetyllysine modification. A heme b-binding site is contributed by His91. Cys92 is modified (S-nitrosocysteine).

It belongs to the globin family. In terms of assembly, heterotetramer of two alpha chains and two beta chains. In terms of tissue distribution, red blood cells.

Functionally, involved in oxygen transport from the lung to the various peripheral tissues. The protein is Hemoglobin subunit beta (HBB) of Rangifer tarandus (Reindeer).